Here is a 1166-residue protein sequence, read N- to C-terminus: Poly [ADP-ribose] polymerase tankyrase-2 (1166 aa).

ANK repeat units lie at residues 57 to 89 (RKST…ARDD), 90 to 122 (GGLI…ARDN), and 123 to 155 (WNYT…IRNT). N203 carries the (3S)-3-hydroxyasparagine; by HIF1AN; partial modification. 6 ANK repeats span residues 210 to 242 (RKST…AKDK), 243 to 275 (GDLV…AMDL), 276 to 308 (WQFT…LLNC), 363 to 398 (THET…EKTK), 399 to 431 (EFLT…ALDN), and 432 to 464 (LGQT…IISL). H238 carries the post-translational modification (3S)-3-hydroxyhistidine; by HIF1AN; partial. N271 is modified ((3S)-3-hydroxyasparagine; by HIF1AN; partial). N427 bears the (3S)-3-hydroxyasparagine; by HIF1AN; partial mark. N518 bears the (3S)-3-hydroxyasparagine; by HIF1AN; partial mark. ANK repeat units follow at residues 525–557 (RQST…AKDK), 558–590 (GGLV…VADL), and 591–623 (WKFT…KKNR). An HIF1AN-binding region spans residues 545–553 (LLQHGADVH). A (3S)-3-hydroxyhistidine; by HIF1AN; partial modification is found at H553. N586 is modified ((3S)-3-hydroxyasparagine; by HIF1AN; partial). (3S)-3-hydroxyasparagine; by HIF1AN; partial is present on residues N671, N706, and N739. ANK repeat units lie at residues 678 to 710 (RHST…AQDK), 711 to 743 (GGLI…ATDK), and 744 to 776 (WAFT…LKNQ). The interval 819–839 (GATADALSSGPSSPSSLSAAS) is disordered. A compositionally biased stretch (low complexity) spans 822–839 (ADALSSGPSSPSSLSAAS). The 64-residue stretch at 873-936 (GVDFSITQFV…IKGVERLISG (64 aa)) folds into the SAM domain. Residues 959–1164 (SPDDKEFQSV…YQIMRPEGMV (206 aa)) form the PARP catalytic domain. Zn(2+)-binding residues include C1081, H1084, C1089, and C1092.

The protein belongs to the ARTD/PARP family. Oligomerizes and associates with TNKS. Interacts with the cytoplasmic domain of LNPEP/Otase in SLC2A4/GLUT4-vesicles. Binds to the N-terminus of Grb14 and TRF1 with its ankyrin repeat region. Interacts with HIF1AN. Interacts with RNF146; this interaction leads to ubiquitination and proteasomal degradation. Interacts with NUMA1. Ubiquitinated at 'Lys-48' and 'Lys-63' by RNF146 when auto-poly-ADP-ribosylated; this leads to degradation. Deubiquitinated by USP25; leading to stabilization. In terms of processing, ADP-ribosylated (-auto). Poly-ADP-ribosylated protein is recognized by RNF146, followed by ubiquitination. Post-translationally, the crystallographic evidence suggests that the 3-hydroxyhistidine may be the (3S) stereoisomer. As to expression, highly expressed in placenta, skeletal muscle, liver, brain, kidney, heart, thymus, spinal cord, lung, peripheral blood leukocytes, pancreas, lymph nodes, spleen, prostate, testis, ovary, small intestine, colon, mammary gland, breast and breast carcinoma, and in common-type meningioma. Highly expressed in fetal liver, heart and brain.

The protein resides in the cytoplasm. Its subcellular location is the golgi apparatus membrane. It localises to the nucleus. The protein localises to the chromosome. It is found in the telomere. The enzyme catalyses NAD(+) + (ADP-D-ribosyl)n-acceptor = nicotinamide + (ADP-D-ribosyl)n+1-acceptor + H(+).. It catalyses the reaction L-aspartyl-[protein] + NAD(+) = 4-O-(ADP-D-ribosyl)-L-aspartyl-[protein] + nicotinamide. The catalysed reaction is L-glutamyl-[protein] + NAD(+) = 5-O-(ADP-D-ribosyl)-L-glutamyl-[protein] + nicotinamide. With respect to regulation, specifically inhibited by XAV939, a small molecule, leading to inhibit the Wnt signaling pathway by stabilizing AXIN1 and AXIN2. Inhibited by talazoparib. Functionally, poly-ADP-ribosyltransferase involved in various processes such as Wnt signaling pathway, telomere length and vesicle trafficking. Acts as an activator of the Wnt signaling pathway by mediating poly-ADP-ribosylation of AXIN1 and AXIN2, 2 key components of the beta-catenin destruction complex: poly-ADP-ribosylated target proteins are recognized by RNF146, which mediates their ubiquitination and subsequent degradation. Also mediates poly-ADP-ribosylation of BLZF1 and CASC3, followed by recruitment of RNF146 and subsequent ubiquitination. Mediates poly-ADP-ribosylation of TERF1, thereby contributing to the regulation of telomere length. Stimulates 26S proteasome activity. This Homo sapiens (Human) protein is Poly [ADP-ribose] polymerase tankyrase-2.